Here is a 357-residue protein sequence, read N- to C-terminus: Red-sensitive opsin (357 aa).

At M1 to V49 the chain is on the extracellular side. N-linked (GlcNAc...) asparagine glycosylation is present at N31. A helical transmembrane segment spans residues Y50–A74. Topologically, residues T75–N86 are cytoplasmic. Residues W87–F112 traverse the membrane as a helical segment. The Extracellular segment spans residues F113–E126. A disulfide bridge connects residues C123 and C200. A helical transmembrane segment spans residues G127–W146. At E147 to W165 the chain is on the cytoplasmic side. The chain crosses the membrane as a helical span at residues A166 to S189. At R190–S215 the chain is on the extracellular side. A helical transmembrane segment spans residues Y216–I243. The Cytoplasmic segment spans residues R244 to R265. A helical membrane pass occupies residues M266–A289. Residues A290–H297 are Extracellular-facing. A helical transmembrane segment spans residues P298–M322. An N6-(retinylidene)lysine modification is found at K309. Residues N323 to A357 are Cytoplasmic-facing.

The protein belongs to the G-protein coupled receptor 1 family. Opsin subfamily. Phosphorylated on some or all of the serine and threonine residues present in the C-terminal region. In terms of tissue distribution, the color pigments are found in the cone photoreceptor cells.

It localises to the membrane. In terms of biological role, visual pigments are the light-absorbing molecules that mediate vision. They consist of an apoprotein, opsin, covalently linked to cis-retinal. In Oryzias latipes (Japanese rice fish), this protein is Red-sensitive opsin.